The following is a 449-amino-acid chain: MRVSCVYATASRWGGPPVASEVRGDAAISTTPDAAPGLAARRRRILFVAEAVTLAHVVRPFALAQSLDPSRYEVHFACDPRYNQLLGPLPFRHHAIHTIPSERFFGNLTQGRFYAMRTLRKYVEADLRVLDEIAPDLVVGDLRISLSVSARLAGIPYIAIANAYWSPYAQRRFPLPDVIWTRLFGVRLVKLLYRLERPLLFALQCMPLNWVRRRHGLSSLGWNLCRIFTDGDHTLYADVPELMPTYDLPANHEYLGPVLWSPAGKPPTWWDSLPTDRPIVYATLGTSGGRNLLQLVLNALAELPVTVIAATAGRSDLKTVPANAFVADYLPGEAAAARSAVVVCNGGSLTTQQALVAGVPVIGVAGNLDQHLNMEAVERAGAGVLLRTERLKSQRVAGAVMQVISRSEYRQAAARLADAFGRDRVGFPQHVENALRLMPENRPRTWLAS.

This sequence belongs to the glycosyltransferase 28 family.

In terms of biological role, catalyzes the transfer of the first rhamnosyl residue on p-hydroxybenzoic acid or phenolphthiocerol derivatives to form, after O-methylation at position 2 of the sugar unit, mono-O-methyl-glycosyl-p-hydroxybenzoic acid derivative (p-HBAD I) and 2-O-methyl-rhamnosyl-phenolphthiocerol dimycocerosate (also called mycoside B) during p-hydroxybenzoic acid derivatives (p-HBAD) and glycosylated phenolphthiocerol dimycocerosates (PGL) biosynthesis. The polypeptide is PGL/p-HBAD biosynthesis rhamnosyltransferase (Mycobacterium bovis (strain BCG / Pasteur 1173P2)).